Consider the following 184-residue polypeptide: ATP synthase subunit b, chloroplastic (184 aa).

A helical transmembrane segment spans residues 27–49 (LATNPINLSVVLGVLIFFGKGVL).

This sequence belongs to the ATPase B chain family. In terms of assembly, F-type ATPases have 2 components, F(1) - the catalytic core - and F(0) - the membrane proton channel. F(1) has five subunits: alpha(3), beta(3), gamma(1), delta(1), epsilon(1). F(0) has four main subunits: a(1), b(1), b'(1) and c(10-14). The alpha and beta chains form an alternating ring which encloses part of the gamma chain. F(1) is attached to F(0) by a central stalk formed by the gamma and epsilon chains, while a peripheral stalk is formed by the delta, b and b' chains.

It is found in the plastid. Its subcellular location is the chloroplast thylakoid membrane. Functionally, f(1)F(0) ATP synthase produces ATP from ADP in the presence of a proton or sodium gradient. F-type ATPases consist of two structural domains, F(1) containing the extramembraneous catalytic core and F(0) containing the membrane proton channel, linked together by a central stalk and a peripheral stalk. During catalysis, ATP synthesis in the catalytic domain of F(1) is coupled via a rotary mechanism of the central stalk subunits to proton translocation. Component of the F(0) channel, it forms part of the peripheral stalk, linking F(1) to F(0). In Oenothera elata subsp. hookeri (Hooker's evening primrose), this protein is ATP synthase subunit b, chloroplastic.